Here is a 331-residue protein sequence, read N- to C-terminus: Beta-ketoacyl-[acyl-carrier-protein] synthase III (331 aa).

Residues cysteine 113 and histidine 256 contribute to the active site. Residues 257 to 261 (QANKR) form an ACP-binding region. Asparagine 286 is an active-site residue.

The protein belongs to the thiolase-like superfamily. FabH family. Homodimer.

Its subcellular location is the cytoplasm. It catalyses the reaction malonyl-[ACP] + acetyl-CoA + H(+) = 3-oxobutanoyl-[ACP] + CO2 + CoA. It participates in lipid metabolism; fatty acid biosynthesis. Its function is as follows. Catalyzes the condensation reaction of fatty acid synthesis by the addition to an acyl acceptor of two carbons from malonyl-ACP. Catalyzes the first condensation reaction which initiates fatty acid synthesis and may therefore play a role in governing the total rate of fatty acid production. Possesses both acetoacetyl-ACP synthase and acetyl transacylase activities. Its substrate specificity determines the biosynthesis of branched-chain and/or straight-chain of fatty acids. This chain is Beta-ketoacyl-[acyl-carrier-protein] synthase III, found in Solibacter usitatus (strain Ellin6076).